Here is a 960-residue protein sequence, read N- to C-terminus: Putative helicase L207/L206 (960 aa).

The segment at 1–32 is disordered; sequence MTSKTENKKSVSSKTGRTTNNSTNKKTTEKSV. Residues 12 to 25 are compositionally biased toward low complexity; that stretch reads SSKTGRTTNNSTNK. In terms of domain architecture, SF3 helicase spans 646 to 807; sequence SMREYILTLL…FIKHSEATKK (162 aa).

This chain is Putative helicase L207/L206, found in Acanthamoeba polyphaga mimivirus (APMV).